Consider the following 226-residue polypeptide: 7-carboxy-7-deazaguanine synthase (226 aa).

Residues 10–12 (LQG) and R25 each bind substrate. The region spanning 16–221 (YTGIPCIFVR…LQTHKFIWTP (206 aa)) is the Radical SAM core domain. [4Fe-4S] cluster-binding residues include C29, C33, and C36. S38 provides a ligand contact to Mg(2+). Substrate is bound at residue T69. G71 serves as a coordination point for S-adenosyl-L-methionine.

It belongs to the radical SAM superfamily. 7-carboxy-7-deazaguanine synthase family. As to quaternary structure, homodimer. It depends on [4Fe-4S] cluster as a cofactor. S-adenosyl-L-methionine is required as a cofactor. Mg(2+) serves as cofactor.

It carries out the reaction 6-carboxy-5,6,7,8-tetrahydropterin + H(+) = 7-carboxy-7-deazaguanine + NH4(+). It functions in the pathway purine metabolism; 7-cyano-7-deazaguanine biosynthesis. Its function is as follows. Catalyzes the complex heterocyclic radical-mediated conversion of 6-carboxy-5,6,7,8-tetrahydropterin (CPH4) to 7-carboxy-7-deazaguanine (CDG), a step common to the biosynthetic pathways of all 7-deazapurine-containing compounds. The chain is 7-carboxy-7-deazaguanine synthase from Koribacter versatilis (strain Ellin345).